A 34-amino-acid polypeptide reads, in one-letter code: Photosystem II reaction center protein M (34 aa).

Residues 7–27 traverse the membrane as a helical segment; it reads GFVASLLFILVPAIFLIVLYI.

The protein belongs to the PsbM family. In terms of assembly, PSII is composed of 1 copy each of membrane proteins PsbA, PsbB, PsbC, PsbD, PsbE, PsbF, PsbH, PsbI, PsbJ, PsbK, PsbL, PsbM, PsbT, PsbX, PsbY, PsbZ, Psb30/Ycf12, peripheral proteins PsbO, CyanoQ (PsbQ), PsbU, PsbV and a large number of cofactors. It forms dimeric complexes.

It is found in the cellular thylakoid membrane. One of the components of the core complex of photosystem II (PSII). PSII is a light-driven water:plastoquinone oxidoreductase that uses light energy to abstract electrons from H(2)O, generating O(2) and a proton gradient subsequently used for ATP formation. It consists of a core antenna complex that captures photons, and an electron transfer chain that converts photonic excitation into a charge separation. This subunit is found at the monomer-monomer interface. The sequence is that of Photosystem II reaction center protein M from Parasynechococcus marenigrum (strain WH8102).